Reading from the N-terminus, the 489-residue chain is MSLASLDLNALWLEHSAVIATLFAFGTALFLVSRSQKQSLNLPRFEVTNDVLKTIEEAHAQYPDDPFILSMVGMELAILPRSGIDVIKTLPEDQVSIKRHHHDVFLGEYTYMGTKSPEFDEAMRYDLTRNTPTVLASFVAEVQYAVEDSFGRPDQWTAFQPRACMSKIASLMSGRAFVGLPLSRDNTWVDATVRYTQDVTRAWLVLRTIPWVLRPFVAPFLPQVRSLKNQRRMTEERLTPLLDPSNAKNRDEIPGGDMLRWFRQRYPQGPTPKQLARDQLLATFASIYNLSNALSYLLFDLATYPEHIEPLRQELQEVLKGEPVNKENIQKLKKLDSFIRESQRLSPPSLANMPRIVTNPRGLKLPSGHTIPCGMRIMVRAHTLNLDPNLWPNPTRFDGFRFSKLREIPGNTFKYQHATTGTDNINFGHGLWACPGRHFASSQMKVVLAHLLLNYDIKLPNRMEKPQQQHFGLAIVPDTEQMVLLKIRG.

The chain crosses the membrane as a helical span at residues 12–32 (WLEHSAVIATLFAFGTALFLV). Asparagine 289 carries an N-linked (GlcNAc...) asparagine glycan. Residue cysteine 434 participates in heme binding.

Belongs to the cytochrome P450 family. It depends on heme as a cofactor.

The protein resides in the membrane. The protein operates within mycotoxin biosynthesis. Cytochrome P450 monooxygenase; part of the gene cluster that mediates the biosynthesis of acetylaranotin, a member of the epipolythiodioxopiperazine (ETP) class of toxins characterized by a disulfide-bridged cyclic dipeptide. The first step of acetylaranotin biosynthesis is performed by the NRPS ataP which produces diketopiperazine cyclo-L-Phe-L-Phe via the condensation of 2 phenylalanines (L-Phe). The ataC domain of ataTC then catalyzes the formation of bishydroxylation of cyclo-L-Phe-L-Phe. The glutathione S-transferase domain ataG in ataIMG further catalyzes the conjugation of two glutathiones to the bishydroxylated intermediate. Next, the dipeptidase ataJ removes the Glu residues. The following step is performed by the carbon sulfur lyase domain ataI of ataIMG which may convert the bis-cysteinyl adduct to yield an epidithiol intermediate. The ataT domain from ataTC then catalyzes the oxidation of the free dithiols, followed by a cyclization step catalyzed by the cytochrome P450 ataF. AtaF probably acts as an epoxidase to promote a dual epoxidation formation at C8 and C9 along with C8' and C9', followed by the spontaneous nucleophilic attack of the amide nitrogens N10 and N10' to yield an intermediate with the pyrrolidine partial structure. The final steps of acetylaranotin biosynthesis involve the acetylation and ring rearrangement of an epitetrathiodiketopiperazine intermediate to produce acetylaranotin. AtaH probably catalyzes the acetylation of epitetrathiodiketopiperazine to produce a diacetate and ataY is responsible for the formation of the dihydrooxepin moiety that converts the diacetate intermediate to acetylaranotin via acetylapoaranotin. Both enzymes could function independently in the absence of the other. The acetylaranotin bis-thiomethyltransferase ataS located outside of acetylaranotin gene cluster is the main thiomethyltransferase responsible for converting acetylaranotin and its related intermediates to their methylated forms. In Aspergillus terreus (strain NIH 2624 / FGSC A1156), this protein is Cytochrome P450 monooxygenase ataF.